The following is a 587-amino-acid chain: Kelch-like protein 3 (587 aa).

The segment at 1 to 24 is disordered; the sequence is MEGESVKPSPQPTEQAGDGEKNRR. Residues 50-117 form the BTB domain; it reads CDVMIVAEDV…IYTAEIEVTE (68 aa). The region spanning 152 to 254 is the BACK domain; the sequence is CLGIRAFADV…PRDYLVQTVE (103 aa). Thr-295 is subject to Phosphothreonine. Kelch repeat units follow at residues 302–347, 348–394, 396–441, 442–490, 491–537, and 539–585; these read VMIV…FMAG, HVYA…VLND, LYAV…VVEG, KLYA…VLSG, QLYA…AVNG, and LYVV…VSAS. Thr-375 is modified (phosphothreonine). 2 positions are modified to phosphoserine: Ser-376 and Ser-433.

Belongs to the KLHL3 family. In terms of assembly, homodimer. Component of the BCR(KLHL3) E3 ubiquitin ligase complex, at least composed of CUL3 and KLHL3 and RBX1. Interacts with CLDN8. Post-translationally, phosphorylation at Ser-433 by PKA or PKC decreases the interaction with WNK1 and WNK4, leading to inhibit their degradation by the BCR(KLHL3) complex. Phosphorylated at Ser-433 by PKC in response to angiotensin II signaling, decreasing ability to promote degradation of WNK1 and WNK4, leading to activation of Na-Cl cotransporter SLC12A3/NCC. Phosphorylation at Ser-433 is increased by insulin. Dephosphorylated at Ser-433 by calcineurin PPP3CA, promoting degradation of WNK1 and WNK4.

It localises to the cytoplasm. The protein resides in the cytoskeleton. The protein localises to the cytosol. Its pathway is protein modification; protein ubiquitination. Functionally, substrate-specific adapter of a BCR (BTB-CUL3-RBX1) E3 ubiquitin ligase complex that acts as a regulator of ion transport in the distal nephron. The BCR(KLHL3) complex acts by mediating ubiquitination and degradation of WNK1 and WNK4, two activators of Na-Cl cotransporter SLC12A3/NCC in distal convoluted tubule cells of kidney, thereby regulating NaCl reabsorption. The BCR(KLHL3) complex also mediates ubiquitination and degradation of WNK3. The BCR(KLHL3) complex also mediates ubiquitination of CLDN8, a tight-junction protein required for paracellular chloride transport in the kidney, leading to its degradation. The polypeptide is Kelch-like protein 3 (Klhl3) (Rattus norvegicus (Rat)).